The following is a 483-amino-acid chain: Endoplasmic reticulum lectin 1 (483 aa).

The signal sequence occupies residues 1-33 (MEEGGGGVRSLVPGGPVLLVLCGLLEASGGGRA). MRH domains lie at 111–246 (SSCS…LCSH) and 342–469 (SYCF…ICKI). A disulfide bond links Cys-113 and Cys-126. A glycan (N-linked (GlcNAc...) asparagine) is linked at Asn-195. 5 disulfides stabilise this stretch: Cys-199-Cys-232, Cys-215-Cys-244, Cys-344-Cys-357, Cys-421-Cys-455, and Cys-436-Cys-467.

May form a complex with OS9, HSPA5, SYVN1, and SEL1L with which it interacts directly. Interacts (via PRKCSH 2 domain) with KREMEN2 (when glycosylated). Interacts with HSPA5. In terms of processing, isoform 1 and isoform 2 are N-glycosylated.

It localises to the endoplasmic reticulum lumen. Probable lectin that binds selectively to improperly folded lumenal proteins. May function in endoplasmic reticulum quality control and endoplasmic reticulum-associated degradation (ERAD) of both non-glycosylated proteins and glycoproteins. This is Endoplasmic reticulum lectin 1 (ERLEC1) from Homo sapiens (Human).